We begin with the raw amino-acid sequence, 968 residues long: uncharacterized protein (968 aa).

5 disordered regions span residues 124-177 (SSIS…FSFP), 348-437 (QEDS…VNDS), 572-595 (TTTTTITQQQQQQQQQQQQQQQNT), 608-627 (PKASNKLANNSNGKKVGSSK), and 837-877 (KASK…KKGK). Over residues 131–157 (TIESNYLSNPSSPCQSTPILESSTPFS) the composition is skewed to polar residues. Composition is skewed to low complexity over residues 158-177 (QKLMSNEQQQQQQPQNFSFP), 352-431 (NNNN…NCNN), and 572-593 (TTTTTITQQQQQQQQQQQQQQQ). Positions 841–857 (DSSSSPTASSAAPGDSS) are enriched in low complexity.

This is an uncharacterized protein from Dictyostelium discoideum (Social amoeba).